A 271-amino-acid chain; its full sequence is 3-methyl-2-oxobutanoate hydroxymethyltransferase (271 aa).

Mg(2+) contacts are provided by aspartate 51 and aspartate 90. 3-methyl-2-oxobutanoate is bound by residues 51-52, aspartate 90, and lysine 118; that span reads DS. Glutamate 120 serves as a coordination point for Mg(2+). The active-site Proton acceptor is glutamate 186.

The protein belongs to the PanB family. In terms of assembly, homodecamer; pentamer of dimers. Mg(2+) serves as cofactor.

It localises to the cytoplasm. The catalysed reaction is 3-methyl-2-oxobutanoate + (6R)-5,10-methylene-5,6,7,8-tetrahydrofolate + H2O = 2-dehydropantoate + (6S)-5,6,7,8-tetrahydrofolate. It participates in cofactor biosynthesis; (R)-pantothenate biosynthesis; (R)-pantoate from 3-methyl-2-oxobutanoate: step 1/2. In terms of biological role, catalyzes the reversible reaction in which hydroxymethyl group from 5,10-methylenetetrahydrofolate is transferred onto alpha-ketoisovalerate to form ketopantoate. The protein is 3-methyl-2-oxobutanoate hydroxymethyltransferase of Stenotrophomonas maltophilia (strain R551-3).